The following is a 94-amino-acid chain: RING finger protein Z (94 aa).

Residues 1–19 are compositionally biased toward polar residues; the sequence is MGNCNGASKSNQPDSSRVT. Residues 1-20 are disordered; the sequence is MGNCNGASKSNQPDSSRVTQ. Gly2 is lipidated: N-myristoyl glycine; by host. An RING-type; atypical zinc finger spans residues 39–75; the sequence is CKCCWFADTNLITCNDHYLCLRCHQVMLRNSDLCNIC. Positions 89 to 92 match the PTAP/PSAP motif motif; the sequence is PTAP.

It belongs to the arenaviridae Z protein family. As to quaternary structure, interacts with protein NP; this interaction probably directs the encapsidated genome to budding sites. Interacts (via RING domain) with polymerase L; this interaction inhibits viral transcription and replication, Z partially blocks the product exit tunnel for the releasing nascent RNA product. Interacts with the glycoprotein complex; this interaction plays a role in virion budding. Interacts with host eIF4E; this interaction results in eIF4E reduced affinity for its substrate, the 5'-m7 G cap structure. Interacts (via late-budding domain) with host TSG101; this interaction is essential for budding and release of viral particles. Interacts with host RPLP0; this interaction may serve to load ribosome-like particles inside the virion. Interacts with host PML; this interaction induces PML bodies redistribution in the cytoplasm upon viral infection. In terms of processing, myristoylation is required for the role of RING finger protein Z in assembly and budding.

The protein resides in the virion. The protein localises to the host cytoplasm. It is found in the host perinuclear region. Its subcellular location is the host cell membrane. Functionally, plays a crucial role in virion assembly and budding. Expressed late in the virus life cycle, it acts as an inhibitor of viral transcription and RNA synthesis by interacting with the viral polymerase L. Presumably recruits the NP encapsidated genome to cellular membranes at budding sites via direct interaction with NP. Plays critical roles in the final steps of viral release by interacting with host TSG101, a member of the vacuolar protein-sorting pathway and using other cellular host proteins involved in vesicle formation pathway. The budding of the virus progeny occurs after association of protein Z with the viral glycoprotein complex SSP-GP1-GP2 at the cell periphery, step that requires myristoylation of protein Z. Also selectively represses protein production by associating with host eIF4E. In cell-based minigenome assay, has an inhibitory effect on the ribonucleoprotein machinery (vRNP), which is responsible for the replication and transcription of the viral genome. The chain is RING finger protein Z from Akodon azarae (Azara's grass mouse).